The chain runs to 298 residues: Cytochrome c oxidase subunit 2 (298 aa).

The first 29 residues, 1–29 (MMAIATKRRGVAAVMSLGVATMTAVPALA), serve as a signal peptide directing secretion. Gln30 carries the post-translational modification Pyrrolidone carboxylic acid. The Periplasmic segment spans residues 30–55 (QDVLGDLPVIGKPVNGGMNFQPASSP). The chain crosses the membrane as a helical span at residues 56-88 (LAHDQQWLDHFVLYIITAVTIFVCLLLLICIVR). Over 89–103 (FNRRANPVPARFTHN) the chain is Cytoplasmic. A helical transmembrane segment spans residues 104-134 (TPIEVIWTLVPVLILVAIGAFSLPILFRSQE). The Periplasmic portion of the chain corresponds to 135–280 (MPNDPDLVIK…WLAGAKEEFA (146 aa)). The Cu cation site is built by His210, Cys245, Glu247, Cys249, His253, and Met256. Residues 281–298 (ADASDYLPASPVKLASAE) constitute a propeptide, C-terminal propeptide.

The protein belongs to the cytochrome c oxidase subunit 2 family. Binuclear copper center (CuA) serves as cofactor.

The protein resides in the cell inner membrane. The enzyme catalyses 4 Fe(II)-[cytochrome c] + O2 + 8 H(+)(in) = 4 Fe(III)-[cytochrome c] + 2 H2O + 4 H(+)(out). Functionally, subunits I and II form the functional core of the enzyme complex. Electrons originating in cytochrome c are transferred via heme a and Cu(A) to the binuclear center formed by heme a3 and Cu(B). This chain is Cytochrome c oxidase subunit 2 (ctaC), found in Paracoccus denitrificans.